A 666-amino-acid polypeptide reads, in one-letter code: Endogenous retrovirus group K member 10 Gag polyprotein (666 aa).

Residue glycine 2 is the site of N-myristoyl glycine attachment. A disordered region spans residues 164-183 (EGKGPELMGPSESKPRGTSP). 2 CCHC-type zinc fingers span residues 544-561 (GKCYNCGQIGHLKKNCPV) and 580-597 (DLCPRCKKGKHWASQCRS). Residues 598–642 (KFDKNGQPLSGNEQRGQPQAPQQTGAFPIQPFVPQGFQGQQPPLS) are disordered. The segment covering 604–622 (QPLSGNEQRGQPQAPQQTG) has biased composition (polar residues). Residues 624-640 (FPIQPFVPQGFQGQQPP) show a composition bias toward low complexity.

Belongs to the beta type-B retroviral Gag protein family. HERV class-II K(HML-2) gag subfamily. Post-translationally, myristoylation is essential for retroviral assembly. Alteration of the glycine residue leads to a block in the budding of particles and an accumulation of Gag inside the cell. In terms of processing, specific enzymatic cleavages may yield mature proteins.

It localises to the cell membrane. Its function is as follows. The products of the Gag polyproteins of infectious retroviruses perform highly complex orchestrated tasks during the assembly, budding, maturation, and infection stages of the viral replication cycle. During viral assembly, the proteins form membrane associations and self-associations that ultimately result in budding of an immature virion from the infected cell. Gag precursors also function during viral assembly to selectively bind and package two plus strands of genomic RNA. Endogenous Gag proteins may have kept, lost or modified their original function during evolution. The polypeptide is Endogenous retrovirus group K member 10 Gag polyprotein (ERVK-10) (Homo sapiens (Human)).